Consider the following 1948-residue polypeptide: Receptor-type tyrosine-protein phosphatase S (1948 aa).

Positions 1–29 (MAPTWGPGMVSVVGPMGLLVVLLVGGCAA) are cleaved as a signal peptide. The Extracellular portion of the chain corresponds to 30 to 1282 (EEPPRFIKEP…PQPIVDGEEG (1253 aa)). 3 Ig-like C2-type domains span residues 33 to 123 (PRFI…AKLT), 135 to 233 (PNID…ANLY), and 245 to 327 (PRFS…AQIT). Intrachain disulfides connect Cys54-Cys107 and Cys156-Cys216. The interval 68 to 72 (KKGKK) is important for binding to glycosaminoglycan chains. 2 N-linked (GlcNAc...) asparagine glycosylation sites follow: Asn263 and Asn308. Cys266 and Cys311 are disulfide-bonded. Fibronectin type-III domains follow at residues 334-424 (APGT…TGEQ), 429-523 (APRN…TQQG), 527-616 (QPMN…TLQS), 621-718 (PPQD…TDED), 723-831 (PPRK…TKGA), 832-930 (VLGR…TPRG), 931-1033 (HPQI…FLRD), and 1036-1120 (SPKN…TAFN). The disordered stretch occupies residues 700–724 (TEVGPGPESSPVVVRTDEDVPSAPP). The span at 701 to 713 (EVGPGPESSPVVV) shows a compositional bias: low complexity. Asn733 carries N-linked (GlcNAc...) asparagine glycosylation. Asn940 carries N-linked (GlcNAc...) asparagine glycosylation. A helical transmembrane segment spans residues 1283–1303 (LIWVIGPVLAVVFIICIVIAI). Residues 1304 to 1948 (LLYKNKPDSK…YLGSFDHYAT (645 aa)) are Cytoplasmic-facing. Composition is skewed to basic and acidic residues over residues 1311–1321 (DSKRKDSEPRT) and 1331–1340 (APHHPKDPVE). Residues 1311–1340 (DSKRKDSEPRTKCLLNNADLAPHHPKDPVE) are disordered. 2 consecutive Tyrosine-protein phosphatase domains span residues 1393–1648 (LSQE…LLEA) and 1680–1939 (MELE…ALEY). Substrate is bound by residues Asp1557, 1589–1595 (CSAGVGR), and Gln1633. Residue Cys1589 is the Phosphocysteine intermediate of the active site. Cys1880 serves as the catalytic Phosphocysteine intermediate.

Belongs to the protein-tyrosine phosphatase family. Receptor class 2A subfamily. As to quaternary structure, binding to large heparan sulfate proteoglycan structures promotes oligomerization. Binding to chondroitin sulfate proteoglycan does not lead to oligomerization. Interacts (via Ig-like domains) with NTRK3. Interacts (via Ig-like domains) with NTRK1, but does not form detectable complexes with NTRK2. Interacts with PPFIA1, PPFIA2 and PPFIA3. A cleavage occurs, separating the extracellular domain from the transmembrane segment. This process called 'ectodomain shedding' is thought to be involved in receptor desensitization, signal transduction and/or membrane localization. Detected in peripheral blood plasmacytoid dendritic cells (at protein level). Detected in all tissues tested except for placenta and liver. Detected in peripheral blood plasmacytoid dendritic cells.

It is found in the cell membrane. It localises to the cell projection. Its subcellular location is the axon. The protein localises to the perikaryon. The protein resides in the cytoplasmic vesicle. It is found in the secretory vesicle. It localises to the synaptic vesicle membrane. Its subcellular location is the synapse. The protein localises to the synaptosome. The protein resides in the postsynaptic density. It is found in the neuron projection. It localises to the growth cone. The catalysed reaction is O-phospho-L-tyrosyl-[protein] + H2O = L-tyrosyl-[protein] + phosphate. Cell surface receptor that binds to glycosaminoglycans, including chondroitin sulfate proteoglycans and heparan sulfate proteoglycan. Binding to chondroitin sulfate and heparan sulfate proteoglycans has opposite effects on PTPRS oligomerization and regulation of neurite outgrowth. Contributes to the inhibition of neurite and axonal outgrowth by chondroitin sulfate proteoglycans, also after nerve transection. Plays a role in stimulating neurite outgrowth in response to the heparan sulfate proteoglycan GPC2. Required for normal brain development, especially for normal development of the pituitary gland and the olfactory bulb. Functions as a tyrosine phosphatase. Mediates dephosphorylation of NTRK1, NTRK2 and NTRK3. Plays a role in down-regulation of signaling cascades that lead to the activation of Akt and MAP kinases. Down-regulates TLR9-mediated activation of NF-kappa-B, as well as production of TNF, interferon alpha and interferon beta. This Homo sapiens (Human) protein is Receptor-type tyrosine-protein phosphatase S (PTPRS).